The primary structure comprises 892 residues: Translation initiation factor IF-2 (892 aa).

The tract at residues 88 to 304 (KKRTFVKRDP…SSLQQGFQKP (217 aa)) is disordered. Composition is skewed to basic and acidic residues over residues 93 to 159 (VKRD…KDKV) and 166 to 216 (DMTK…EENK). Positions 254 to 269 (GRGRNAKAARPAKKGK) are enriched in basic residues. The segment covering 270–282 (HAESKADREEARA) has biased composition (basic and acidic residues). A tr-type G domain is found at 391 to 560 (PRAPVVTIMG…LLQAEVLELK (170 aa)). Positions 400 to 407 (GHVDHGKT) are G1. A GTP-binding site is contributed by 400–407 (GHVDHGKT). Residues 425–429 (GITQH) form a G2 region. A G3 region spans residues 446 to 449 (DTPG). Residues 446–450 (DTPGH) and 500–503 (NKID) each bind GTP. The G4 stretch occupies residues 500–503 (NKID). Positions 536–538 (SAK) are G5.

The protein belongs to the TRAFAC class translation factor GTPase superfamily. Classic translation factor GTPase family. IF-2 subfamily.

Its subcellular location is the cytoplasm. In terms of biological role, one of the essential components for the initiation of protein synthesis. Protects formylmethionyl-tRNA from spontaneous hydrolysis and promotes its binding to the 30S ribosomal subunits. Also involved in the hydrolysis of GTP during the formation of the 70S ribosomal complex. The protein is Translation initiation factor IF-2 of Salmonella choleraesuis (strain SC-B67).